The following is a 73-amino-acid chain: Large ribosomal subunit protein bL31 (73 aa).

The Zn(2+) site is built by Cys-16, Cys-18, Cys-36, and Cys-39.

It belongs to the bacterial ribosomal protein bL31 family. Type A subfamily. In terms of assembly, part of the 50S ribosomal subunit. The cofactor is Zn(2+).

Binds the 23S rRNA. The sequence is that of Large ribosomal subunit protein bL31 from Citrifermentans bemidjiense (strain ATCC BAA-1014 / DSM 16622 / JCM 12645 / Bem) (Geobacter bemidjiensis).